Consider the following 255-residue polypeptide: uncharacterized protein (255 aa).

The protein belongs to the methyltransferase superfamily.

This is an uncharacterized protein from Bacillus subtilis (strain 168).